The sequence spans 284 residues: Undecaprenyl-diphosphatase (284 aa).

8 consecutive transmembrane segments (helical) span residues Ile-7–Leu-27, Glu-44–His-64, Leu-90–Asp-110, Phe-116–Ile-136, Val-167–Ile-187, Phe-197–Phe-217, Phe-229–Phe-249, and Phe-259–Phe-279.

Belongs to the UppP family.

It localises to the cell membrane. The catalysed reaction is di-trans,octa-cis-undecaprenyl diphosphate + H2O = di-trans,octa-cis-undecaprenyl phosphate + phosphate + H(+). Catalyzes the dephosphorylation of undecaprenyl diphosphate (UPP). Confers resistance to bacitracin. The chain is Undecaprenyl-diphosphatase from Lactococcus lactis subsp. cremoris (strain MG1363).